Here is a 54-residue protein sequence, read N- to C-terminus: Large ribosomal subunit protein bL32c (54 aa).

Belongs to the bacterial ribosomal protein bL32 family.

It localises to the plastid. The protein resides in the chloroplast. This is Large ribosomal subunit protein bL32c from Piper cenocladum (Ant piper).